Reading from the N-terminus, the 384-residue chain is Farnesyl pyrophosphate synthase 1, mitochondrial (384 aa).

Isopentenyl diphosphate is bound by residues K89, R92, and Q128. Mg(2+) is bound by residues D135 and D139. R144 lines the dimethylallyl diphosphate pocket. R145 provides a ligand contact to isopentenyl diphosphate. Dimethylallyl diphosphate contacts are provided by K232, T233, Q271, K288, and K297.

This sequence belongs to the FPP/GGPP synthase family. Requires Mg(2+) as cofactor. In terms of tissue distribution, the FPS1L mRNA accumulates preferentially in inflorescences, whereas the FPS1S mRNA is predominantly expressed in roots and inflorescences.

It is found in the mitochondrion. The protein resides in the cytoplasm. The enzyme catalyses isopentenyl diphosphate + dimethylallyl diphosphate = (2E)-geranyl diphosphate + diphosphate. It carries out the reaction isopentenyl diphosphate + (2E)-geranyl diphosphate = (2E,6E)-farnesyl diphosphate + diphosphate. The protein operates within isoprenoid biosynthesis; farnesyl diphosphate biosynthesis; farnesyl diphosphate from geranyl diphosphate and isopentenyl diphosphate: step 1/1. Its pathway is isoprenoid biosynthesis; geranyl diphosphate biosynthesis; geranyl diphosphate from dimethylallyl diphosphate and isopentenyl diphosphate: step 1/1. Functionally, catalyzes the sequential condensation of isopentenyl pyrophosphate with the allylic pyrophosphates, dimethylallyl pyrophosphate, and then with the resultant geranylpyrophosphate to the ultimate product farnesyl pyrophosphate. In Arabidopsis thaliana (Mouse-ear cress), this protein is Farnesyl pyrophosphate synthase 1, mitochondrial (FPS1).